The sequence spans 177 residues: MTIKSRIRSIPDYPKKGIMFRDITTLIKDPVGFRLVIDNLTQHYLQNGVDFDVIVGIEARGFIIGGALSYALGKGFVPVRKPGKLPADVASQKYELEYGSDTIEIHIDALEEGSRVLLVDDLLATGGTALAAAALVEKVGGVVAEMAFIVNLPDVGGEQRILDKGYSIFSLTDFEGD.

It belongs to the purine/pyrimidine phosphoribosyltransferase family. As to quaternary structure, homodimer.

Its subcellular location is the cytoplasm. The catalysed reaction is AMP + diphosphate = 5-phospho-alpha-D-ribose 1-diphosphate + adenine. It participates in purine metabolism; AMP biosynthesis via salvage pathway; AMP from adenine: step 1/1. In terms of biological role, catalyzes a salvage reaction resulting in the formation of AMP, that is energically less costly than de novo synthesis. The polypeptide is Adenine phosphoribosyltransferase (Chlorobium phaeobacteroides (strain DSM 266 / SMG 266 / 2430)).